The primary structure comprises 815 residues: Ferripyoverdine receptor (815 aa).

Residues 1–43 form the signal peptide; that stretch reads MPAPHGLSPLSKAFLMRRAFQRRILPHSLAMALSLPLAGYVQA. The TBDR plug domain maps to 161–271; the sequence is TPRETPQSIT…LGATINLIRK (111 aa). One can recognise a TBDR beta-barrel domain in the interval 276-815; that stretch reads EFKGHVELGA…NLMFSTRWDF (540 aa). Positions 798 to 815 match the TonB C-terminal box motif; it reads SASYGDPRNLMFSTRWDF.

It belongs to the TonB-dependent receptor family.

The protein localises to the cell outer membrane. Receptor for the siderophore ferripyoverdine. This is Ferripyoverdine receptor (fpvA) from Pseudomonas aeruginosa (strain ATCC 15692 / DSM 22644 / CIP 104116 / JCM 14847 / LMG 12228 / 1C / PRS 101 / PAO1).